We begin with the raw amino-acid sequence, 1215 residues long: Cellulose synthase-like protein D4 (1215 aa).

Disordered stretches follow at residues 24 to 46 (GGDA…SLGS) and 206 to 231 (SDTD…ERDQ). Acidic residues predominate over residues 207–222 (DTDESDSVTDDDDDEA). 2 consecutive transmembrane segments (helical) span residues 321-341 (AILS…GFFL) and 352-372 (AVWL…SWLL). Residues D452 and D905 contribute to the active site. 6 helical membrane passes run 988-1008 (VFLL…KFIV), 1014-1034 (TFLA…LLEI), 1060-1080 (PAAV…SFTL), 1114-1134 (LMVP…VAAA), 1147-1167 (LLGG…FAKG), and 1177-1197 (TIVF…WVYI).

It belongs to the glycosyltransferase 2 family. Plant cellulose synthase-like D subfamily.

The protein resides in the golgi apparatus membrane. Functionally, thought to be a Golgi-localized beta-glycan synthase that polymerize the backbones of noncellulosic polysaccharides (hemicelluloses) of plant cell wall. The sequence is that of Cellulose synthase-like protein D4 (CSLD4) from Oryza sativa subsp. japonica (Rice).